A 67-amino-acid chain; its full sequence is Spiniferin (67 aa).

Positions 1–23 are cleaved as a signal peptide; it reads MKTQLAILLITLVLFQMFSQSDA. A Leucine amide modification is found at leucine 36. The propeptide occupies 40-67; the sequence is GLNDLSDLDELFDGEISKADLDFLREIM.

It belongs to the non-disulfide-bridged peptide (NDBP) superfamily. Short antimicrobial peptide (group 4) family. Expressed by the venom gland.

Its subcellular location is the secreted. The protein localises to the target cell membrane. Alpha-helical and amphipathic peptide with weak antimicrobial activities against both Gram-positive (MIC=41 uM to &gt;82 uM) and Gram-negative (MIC&gt;82 uM) bacteria. It has extremely weak hemolytic activity against human erythrocytes. The sequence is that of Spiniferin from Heterometrus spinifer (Asia giant forest scorpion).